A 1052-amino-acid polypeptide reads, in one-letter code: Malignant fibrous histiocytoma-amplified sequence 1 (1052 aa).

Ala2 carries the post-translational modification N-acetylalanine. LRR repeat units follow at residues 64-85, 88-109, 112-133, 136-157, 159-180, 182-203, 205-226, 228-249, 251-272, 274-296, 297-318, 320-341, and 343-364; these read DIEA…LGSA, SLRV…VAEL, HLTE…VVSA, ELRK…LGAL, HLEE…LSCL, RLRT…LLQL, ALEE…ISAL, ALKI…FCEL, SLES…FSCL, RLKM…LPLA, GLEE…ISGL, RLLT…IVEL, and GLEE…FGQL. Positions 64–364 are required for interaction with PJA2; the sequence is DIEALNLGNN…AVLPDHFGQL (301 aa). Residues 64-649 are required for interaction with PPP2R2A; the sequence is DIEALNLGNN…DKLLSVAEHR (586 aa). Residues 403-649 form the Roc domain; sequence QPAVQPRLKL…DKLLSVAEHR (247 aa). At Lys601 the chain carries N6-acetyllysine.

Interacts with RAF1. Interacts with HSPD1. Interacts with PPP2CA; retains PPP2CA into the cytoplasm and excludes it from the nucleus. Interacts with PPP2R2A; the interaction is direct. Interacts with PJA2. Ubiquitinated. Ubiquitination by PJA2 does not lead MFHAS1 to proteasomal degradation but positively regulates its function in polarization of macrophages. Ubiquitously expressed. Overexpressed in malignant fibrous histiocytomas. Expressed in red blood cells (at protein level).

It is found in the cytoplasm. Functionally, probable GTP-binding protein. Functions in innate immunity and more specifically the inflammatory response as a regulator of the Toll-like receptor TLR2 and TLR4 signaling pathways. Negatively regulates the part of the TLR4 signaling pathway that leads to the activation of the transcription factor AP-1. By retaining the phosphatase complex PP2A into the cytoplasm, prevents the dephosphorylation of the AP-1 subunit JUN which is required for proper activation of the transcription factor. Both inhibits and activates the TLR2-dependent signaling pathway. Positively regulates the TLR2 signaling pathway to activate specifically the downstream p38 and JNK MAP kinases and promote the polarization of macrophages toward the pro-inflammatory M1 phenotype. It may also play a role in the regulation of inflammation induced by high glucose through the PKB/AKT signaling pathway. Also involved in erythrocyte differentiation through activation of the ERK1/ERK2 signaling pathway. In Homo sapiens (Human), this protein is Malignant fibrous histiocytoma-amplified sequence 1.